We begin with the raw amino-acid sequence, 356 residues long: GTPase HflX (356 aa).

In terms of domain architecture, Hflx-type G spans 180-356 (PSIGIVGYTN…KIYQLATQLS (177 aa)). GTP-binding positions include 186–193 (GYTNSGKT), 211–215 (FTTMS), 232–235 (DTVG), 300–303 (NKID), and 334–336 (SAL). 2 residues coordinate Mg(2+): Thr-193 and Thr-213.

The protein belongs to the TRAFAC class OBG-HflX-like GTPase superfamily. HflX GTPase family. In terms of assembly, monomer. Associates with the 50S ribosomal subunit. Does not associate with 70S ribosomes. Mg(2+) serves as cofactor.

The protein resides in the cytoplasm. Its activity is regulated as follows. GTPase activity is stimulated by the presence of 50S ribosomal subunits. Hydrolysis is probably regulated by the HflX N-terminal domain. Its function is as follows. GTPase that associates with the 50S ribosomal subunit and may have a role during protein synthesis or ribosome biogenesis. Specific for GTP. This is GTPase HflX from Saccharolobus solfataricus (strain ATCC 35092 / DSM 1617 / JCM 11322 / P2) (Sulfolobus solfataricus).